Consider the following 290-residue polypeptide: MDIKEYFARISYGGSYEKPDLETLTEIFQHHIQAVPFENLSIHCGETIELDLAATYDKIVRKKRGGWCMENNHLLSWALKTLGYNVTLLGAKVYIPEHDAYADDIDHLLLKVVLHDKSYIVDGGFGMAYQLWQPMELISGKDQPQTPGIFRFVEENGTWYLEKVKRKQYVPNHSDSAPHNVDKEVCRRVYLFTLQPRDIEEFRARNLHLQTAPDSLFVTKSICSLQTPDGVRALVGWKLTEIKYNYKDNMDLVEIRILADEEMEKTLKEKFNITLDKKFVPINTSRLSLF.

Cysteine 68 acts as the Acyl-thioester intermediate in catalysis. Residues histidine 107 and aspartate 122 contribute to the active site.

Belongs to the arylamine N-acetyltransferase family.

The catalysed reaction is an arylamine + acetyl-CoA = an N-acetylarylamine + CoA. It catalyses the reaction an N-hydroxyarylamine + acetyl-CoA = an N-acetoxyarylamine + CoA. Functionally, catalyzes the N- or O-acetylation of various arylamine and heterocyclic amine substrates, and participates in the detoxification of a plethora of hydrazine and arylamine drugs. The protein is Arylamine N-acetyltransferase, pineal gland isozyme NAT-3 of Gallus gallus (Chicken).